The chain runs to 699 residues: D-(-)-3-hydroxybutyrate oligomer hydrolase (699 aa).

The N-terminal stretch at 1–33 (MTAIRGGSRRAPGLALALLGGVLLGACHGDENA) is a signal peptide. Catalysis depends on Ser-311, which acts as the Charge relay system.

The protein belongs to the D-(-)-3-hydroxybutyrate oligomer hydrolase family.

It localises to the secreted. The catalysed reaction is (3R)-hydroxybutanoate dimer + H2O = 2 (R)-3-hydroxybutanoate + H(+). The protein operates within lipid metabolism; butanoate metabolism. In terms of biological role, participates in the degradation of poly-3-hydroxybutyrate (PHB). It works downstream of poly(3-hydroxybutyrate) depolymerase, hydrolyzing D(-)-3-hydroxybutyrate oligomers of various length (3HB-oligomers) into 3HB-monomers. The protein is D-(-)-3-hydroxybutyrate oligomer hydrolase of Burkholderia mallei (strain SAVP1).